The sequence spans 309 residues: Glutaminase (309 aa).

Positions 64, 114, 160, 167, 191, 243, and 261 each coordinate substrate.

Belongs to the glutaminase family. As to quaternary structure, homotetramer.

The enzyme catalyses L-glutamine + H2O = L-glutamate + NH4(+). The protein is Glutaminase of Methylobacterium radiotolerans (strain ATCC 27329 / DSM 1819 / JCM 2831 / NBRC 15690 / NCIMB 10815 / 0-1).